Consider the following 149-residue polypeptide: Calmodulin (149 aa).

Residue A2 is modified to N-acetylalanine. 4 EF-hand domains span residues 8-43 (EQIA…LGQN), 44-79 (PTEA…KMKD), 81-116 (DSEE…LGEK), and 117-149 (LTDE…MTAK). Ca(2+)-binding residues include D21, D23, D25, T27, E32, D59, N61, T63, E68, D94, D96, N98, Y100, and E105. The residue at position 116 (K116) is an N6,N6,N6-trimethyllysine. The Ca(2+) site is built by D130, D132, D134, Q136, and E141.

Belongs to the calmodulin family.

Functionally, calmodulin acts as part of a calcium signal transduction pathway by mediating the control of a large number of enzymes, ion channels, aquaporins and other proteins through calcium-binding. Calcium-binding is required for the activation of calmodulin. Among the enzymes to be stimulated by the calmodulin-calcium complex are a number of protein kinases, such as myosin light-chain kinases and calmodulin-dependent protein kinase type II (CaMK2), and phosphatases. This chain is Calmodulin, found in Myxine glutinosa (Atlantic hagfish).